Consider the following 117-residue polypeptide: Antimicrobial peptide AmAMP1 (117 aa).

The first 25 residues, methionine 1–alanine 25, serve as a signal peptide directing secretion. Positions alanine 26 to arginine 73 are excised as a propeptide. Intrachain disulfides connect cysteine 76-cysteine 115, cysteine 85-cysteine 108, and cysteine 94-cysteine 112.

The protein belongs to the coral AMP family.

The protein localises to the secreted. In terms of biological role, coral peptide that probably acts as an antimicrobial peptide in the surface mucous layer of planula larvae and likely also in adults. Shows moderate to high activity against some Gram-negative and Gram-positive bacteria (tested on E.coli, B.megaterium, S.aureus, E.aesturaii, B.algicola, Acinetobacter spec.). Does not show antibacterial activity against the coral pathogen V.coralliilyticus. This chain is Antimicrobial peptide AmAMP1, found in Acropora millepora (Staghorn coral).